Reading from the N-terminus, the 260-residue chain is 3'-5' ssDNA/RNA exonuclease TatD (260 aa).

Glu92, His128, and His153 together coordinate a divalent metal cation.

This sequence belongs to the metallo-dependent hydrolases superfamily. TatD-type hydrolase family. TatD subfamily. Monomer. Mg(2+) serves as cofactor.

It localises to the cytoplasm. Its function is as follows. 3'-5' exonuclease that prefers single-stranded DNA and RNA. May play a role in the H(2)O(2)-induced DNA damage repair. The sequence is that of 3'-5' ssDNA/RNA exonuclease TatD from Pantoea ananatis (strain LMG 20103).